Reading from the N-terminus, the 121-residue chain is Small ribosomal subunit protein uS13 (121 aa).

The segment at 93–121 (RGLPVRGQNTKNNARTRKGKATAIAGKKK) is disordered. Residues 106 to 121 (ARTRKGKATAIAGKKK) are compositionally biased toward basic residues.

Belongs to the universal ribosomal protein uS13 family. Part of the 30S ribosomal subunit. Forms a loose heterodimer with protein S19. Forms two bridges to the 50S subunit in the 70S ribosome.

Functionally, located at the top of the head of the 30S subunit, it contacts several helices of the 16S rRNA. In the 70S ribosome it contacts the 23S rRNA (bridge B1a) and protein L5 of the 50S subunit (bridge B1b), connecting the 2 subunits; these bridges are implicated in subunit movement. Contacts the tRNAs in the A and P-sites. This chain is Small ribosomal subunit protein uS13, found in Streptococcus uberis (strain ATCC BAA-854 / 0140J).